Here is a 417-residue protein sequence, read N- to C-terminus: Phosphoglycerate kinase (417 aa).

The (2R)-3-phosphoglycerate site is built by V23, D24, F25, N26, Q39, R40, S63, H64, G66, R67, L122, R123, H170, and R171. Residue G214 coordinates ADP. G214 serves as a coordination point for CDP. Residues A215 and K216 each contribute to the AMP site. Residue A215 coordinates ATP. A215 provides a ligand contact to Mg(2+). D219 lines the CDP pocket. D219 serves as a coordination point for Mg(2+). K220 is a binding site for AMP. K220 is an ATP binding site. Position 238 (G238) interacts with ADP. Residue G238 coordinates CDP. AMP contacts are provided by G239 and G313. ATP is bound by residues G239 and G313. G338 and F343 together coordinate CDP. F343 serves as a coordination point for ADP. E344 contributes to the AMP binding site. 3 residues coordinate ATP: E344, D375, and T376. Residue D375 coordinates Mg(2+).

Belongs to the phosphoglycerate kinase family. In terms of assembly, monomer. Mg(2+) serves as cofactor.

Its subcellular location is the cytoplasm. The protein localises to the mitochondrion. It carries out the reaction (2R)-3-phosphoglycerate + ATP = (2R)-3-phospho-glyceroyl phosphate + ADP. It participates in carbohydrate degradation; glycolysis; pyruvate from D-glyceraldehyde 3-phosphate: step 2/5. In terms of biological role, catalyzes one of the two ATP producing reactions in the glycolytic pathway via the reversible conversion of 1,3-diphosphoglycerate to 3-phosphoglycerate. Both L- and D- forms of purine and pyrimidine nucleotides can be used as substrates, but the activity is much lower on pyrimidines. Negatively regulates the biosynthesis of acetyl-CoA from pyruvate in the mitochondrion. The chain is Phosphoglycerate kinase (PGKA) from Penicillium citrinum.